Consider the following 273-residue polypeptide: IMGHMVNAIEQVDEFLNLGANAIEFDIDFDKDGIAQITHHGIPCDCGRKCTKKAIFTEYLDNIRQVTTPDDPELREQLVLLALDLKLQRISSAKAYRAGEDVAKKLLDHYWQRGNSRARAYILLNIPLVEDYEFIRAFKDTLKNEGYESYNDKVGINFTGNEDLDKIRDVLEILGIHKQVWQADGITSCFARGTERLKEALEKRDTPGYNYINKVYAWTLVRKSIMRRSLRLGVDGVMSNNPDRVIKVLKEKEFADKFRLATYNDNPWEKFRG.

Residue His-4 is part of the active site. Mg(2+) contacts are provided by Glu-24 and Asp-26. His-40 acts as the Nucleophile in catalysis. Disulfide bonds link Cys-44–Cys-50 and Cys-46–Cys-189. Residue Asp-84 participates in Mg(2+) binding.

Belongs to the arthropod phospholipase D family. Class II subfamily. Mg(2+) serves as cofactor. As to expression, expressed by the venom gland.

Its subcellular location is the secreted. It carries out the reaction an N-(acyl)-sphingosylphosphocholine = an N-(acyl)-sphingosyl-1,3-cyclic phosphate + choline. It catalyses the reaction an N-(acyl)-sphingosylphosphoethanolamine = an N-(acyl)-sphingosyl-1,3-cyclic phosphate + ethanolamine. The enzyme catalyses a 1-acyl-sn-glycero-3-phosphocholine = a 1-acyl-sn-glycero-2,3-cyclic phosphate + choline. The catalysed reaction is a 1-acyl-sn-glycero-3-phosphoethanolamine = a 1-acyl-sn-glycero-2,3-cyclic phosphate + ethanolamine. Functionally, dermonecrotic toxins cleave the phosphodiester linkage between the phosphate and headgroup of certain phospholipids (sphingolipid and lysolipid substrates), forming an alcohol (often choline) and a cyclic phosphate. This toxin acts on sphingomyelin (SM). It may also act on ceramide phosphoethanolamine (CPE), lysophosphatidylcholine (LPC) and lysophosphatidylethanolamine (LPE), but not on lysophosphatidylserine (LPS), and lysophosphatidylglycerol (LPG). It acts by transphosphatidylation, releasing exclusively cyclic phosphate products as second products. Induces dermonecrosis, hemolysis, increased vascular permeability, edema, inflammatory response, and platelet aggregation. This is Dermonecrotic toxin SdSicTox-betaIIB1bxiv from Sicarius cf. damarensis (strain GJB-2008) (Six-eyed sand spider).